Consider the following 65-residue polypeptide: Small ribosomal subunit protein eS27 (65 aa).

Zn(2+)-binding residues include C20, C23, C39, and C42. The C4-type zinc-finger motif lies at 20 to 42 (CIDCGNEQIVFSHPATPVRCLVC).

It belongs to the eukaryotic ribosomal protein eS27 family. In terms of assembly, part of the 30S ribosomal subunit. Zn(2+) is required as a cofactor.

This chain is Small ribosomal subunit protein eS27, found in Thermococcus kodakarensis (strain ATCC BAA-918 / JCM 12380 / KOD1) (Pyrococcus kodakaraensis (strain KOD1)).